Reading from the N-terminus, the 129-residue chain is M-zodatoxin-Lt8l (129 aa).

Residues 1–20 form the signal peptide; that stretch reads MKYFVVXXALVAAFACIAES. The propeptide occupies 21-60; the sequence is KPAESEHELAEVEEENELADLEDAVWLEDLADLSDLEETR.

It belongs to the cationic peptide 06 (cytoinsectotoxin) family. In terms of tissue distribution, expressed by the venom gland.

The protein localises to the secreted. Functionally, insecticidal, cytolytic and antimicrobial peptide. Forms voltage-dependent, ion-permeable channels in membranes. At high concentration causes cell membrane lysis. The protein is M-zodatoxin-Lt8l (cit 1-12) of Lachesana tarabaevi (Spider).